The chain runs to 476 residues: Aspartyl/glutamyl-tRNA(Asn/Gln) amidotransferase subunit B (476 aa).

It belongs to the GatB/GatE family. GatB subfamily. Heterotrimer of A, B and C subunits.

The enzyme catalyses L-glutamyl-tRNA(Gln) + L-glutamine + ATP + H2O = L-glutaminyl-tRNA(Gln) + L-glutamate + ADP + phosphate + H(+). The catalysed reaction is L-aspartyl-tRNA(Asn) + L-glutamine + ATP + H2O = L-asparaginyl-tRNA(Asn) + L-glutamate + ADP + phosphate + 2 H(+). In terms of biological role, allows the formation of correctly charged Asn-tRNA(Asn) or Gln-tRNA(Gln) through the transamidation of misacylated Asp-tRNA(Asn) or Glu-tRNA(Gln) in organisms which lack either or both of asparaginyl-tRNA or glutaminyl-tRNA synthetases. The reaction takes place in the presence of glutamine and ATP through an activated phospho-Asp-tRNA(Asn) or phospho-Glu-tRNA(Gln). The polypeptide is Aspartyl/glutamyl-tRNA(Asn/Gln) amidotransferase subunit B (Clostridium botulinum (strain 657 / Type Ba4)).